Here is a 41-residue protein sequence, read N- to C-terminus: Ostricacin-2 (41 aa).

Intrachain disulfides connect Cys8-Cys36, Cys15-Cys30, and Cys20-Cys37.

It localises to the secreted. Has antibacterial activity against the Gram-positive bacterium S.aureus 1056 MRSA (MIC=1.25 ug/ml) and the Gram-negative bacterium E.coli O157:H7 (MIC=0.96 ug/ml). Has antifungal activity against the yeast C.albicans 3153A (MIC=6.20 ug/ml). In Struthio camelus (Common ostrich), this protein is Ostricacin-2.